Reading from the N-terminus, the 287-residue chain is 5'-3' exonuclease (287 aa).

The 99-residue stretch at 172–270 (IYPKEFIDLL…ITSEEITLKK (99 aa)) folds into the 5'-3' exonuclease domain.

Its function is as follows. 5'-3' exonuclease acting preferentially on double-stranded DNA. This is 5'-3' exonuclease (pol) from Buchnera aphidicola subsp. Schizaphis graminum (strain Sg).